An 82-amino-acid chain; its full sequence is Ferredoxin (82 aa).

One can recognise a 4Fe-4S ferredoxin-type domain in the interval 3 to 31 (KYTIVDKDTCIACGACGAAAPDIYDYDDE). The [4Fe-4S] cluster site is built by C12, C15, C18, and C62.

It depends on [4Fe-4S] cluster as a cofactor.

Its function is as follows. Ferredoxins are iron-sulfur proteins that transfer electrons in a wide variety of metabolic reactions. This ferredoxin may act as a phosphodonor to cytochrome P450 BioI. The protein is Ferredoxin (fer) of Bacillus subtilis (strain 168).